Consider the following 234-residue polypeptide: HTH-type transcriptional regulator SmoD (234 aa).

The HTH gntR-type domain occupies 8–76 (LPMYMQIAEM…QGSGNYIRAV (69 aa)). Residues 36–55 (ERDMAADLGIAVGTLRKSLA) constitute a DNA-binding region (H-T-H motif).

Its subcellular location is the cytoplasm. Probably regulates expression of genes involved in the sulfoquinovose monooxygenase (sulfo-SMO) pathway (smoABCDEFGHI). The polypeptide is HTH-type transcriptional regulator SmoD (Agrobacterium fabrum (strain C58 / ATCC 33970) (Agrobacterium tumefaciens (strain C58))).